The sequence spans 187 residues: Calmodulin-like protein 1 (187 aa).

Position 2 is an N-acetylalanine (Ala-2). EF-hand domains are found at residues 8–43 (EQIVEFREAFSLFDKDGDGSITTKELGTVMRSLGQN), 44–79 (PTEAELQDMISEVDADSNGNIEFKEFLGLMARKLRD), 81–116 (DSEEELKEAFRVFDKDQNGFISAAELRHVMANIGER), and 117–152 (LTDEEVGEMISEADVDGDGQINYEEFVKCMMAKKRR). Ca(2+)-binding residues include Asp-21, Asp-23, Asp-25, Ser-27, Glu-32, Asp-57, Asp-59, Asn-61, Asn-63, Glu-68, Asp-94, Asp-96, Asn-98, Glu-105, Asp-130, Asp-132, Asp-134, Gln-136, and Glu-141. The segment at 153–187 (KRIEEKREHDGGSRTKSAGPSAAPASKRGQKCVIL) is disordered. Over residues 154 to 165 (RIEEKREHDGGS) the composition is skewed to basic and acidic residues. The segment covering 169-178 (SAGPSAAPAS) has biased composition (low complexity). At Cys-184 the chain carries Cysteine methyl ester. Residue Cys-184 is the site of S-farnesyl cysteine attachment. Residues 185-187 (VIL) constitute a propeptide, removed in mature form.

This sequence belongs to the calmodulin family. As to expression, expressed in roots, etiolated shoots and flowers.

The protein localises to the membrane. Functionally, calcium-binding protein that binds and activates CAMK1, a calcium/calmodulin-dependent kinase. The polypeptide is Calmodulin-like protein 1 (CML1) (Oryza sativa subsp. indica (Rice)).